Reading from the N-terminus, the 450-residue chain is Sulfite exporter TauE/SafE family protein 1 (450 aa).

The next 12 helical transmembrane spans lie at L5–A25, T48–I68, S70–L90, S97–L117, F130–C150, M153–K173, F223–L243, A261–I281, V316–I336, L340–F360, G378–V398, and A408–T428.

The protein belongs to the 4-toluene sulfonate uptake permease (TSUP) (TC 2.A.102) family.

Its subcellular location is the membrane. The polypeptide is Sulfite exporter TauE/SafE family protein 1 (Arabidopsis thaliana (Mouse-ear cress)).